The chain runs to 1375 residues: DNA-directed RNA polymerase subunit beta' (1375 aa).

Positions 70, 72, 85, and 88 each coordinate Zn(2+). Mg(2+) is bound by residues aspartate 460, aspartate 462, and aspartate 464. Zn(2+) is bound by residues cysteine 800, cysteine 874, cysteine 881, and cysteine 884.

This sequence belongs to the RNA polymerase beta' chain family. As to quaternary structure, the RNAP catalytic core consists of 2 alpha, 1 beta, 1 beta' and 1 omega subunit. When a sigma factor is associated with the core the holoenzyme is formed, which can initiate transcription. Mg(2+) is required as a cofactor. Zn(2+) serves as cofactor.

The catalysed reaction is RNA(n) + a ribonucleoside 5'-triphosphate = RNA(n+1) + diphosphate. DNA-dependent RNA polymerase catalyzes the transcription of DNA into RNA using the four ribonucleoside triphosphates as substrates. The polypeptide is DNA-directed RNA polymerase subunit beta' (Bdellovibrio bacteriovorus (strain ATCC 15356 / DSM 50701 / NCIMB 9529 / HD100)).